Reading from the N-terminus, the 235-residue chain is MEWSTTSNVENVRVAFMPPPWPESSSFNSLHSFNFDPYAGNSYTPGDTQTGPVISVPESEKIMNAYRFPNNNNEMIKKKRLTSGQLASLERSFQEEIKLDSDRKVKLSRELGLQPRQIAVWFQNRRARWKAKQLEQLYDSLRQEYDVVSREKQMLHDEVKKLRALLRDQGLIKKQISAGTIKVSGEEDTVEISSVVVAHPRTENMNANQITGGNQVYGQYNNPMLVASSGWPSYP.

Positions 74–133 form a DNA-binding region, homeobox; the sequence is EMIKKKRLTSGQLASLERSFQEEIKLDSDRKVKLSRELGLQPRQIAVWFQNRRARWKAKQ. Residues 134 to 162 form a leucine-zipper region; the sequence is LEQLYDSLRQEYDVVSREKQMLHDEVKKL.

The protein belongs to the HD-ZIP homeobox family. Class I subfamily. As to expression, widely expressed.

Its subcellular location is the nucleus. Functionally, putative transcription factor. The protein is Putative homeobox-leucine zipper protein ATHB-51 (ATHB-51) of Arabidopsis thaliana (Mouse-ear cress).